A 364-amino-acid polypeptide reads, in one-letter code: D-alanine--D-alanine ligase A (364 aa).

The 204-residue stretch at 145–348 (KRLLRDAGLN…YTDLITRLIE (204 aa)) folds into the ATP-grasp domain. 175–230 (ESKLGLPLFVKPANQGSSVGVSKVTSEEQYAIAVDLAFEFDHKVIVEQGIKGREIE) lines the ATP pocket. Residues Asp302, Glu315, and Asn317 each contribute to the Mg(2+) site.

This sequence belongs to the D-alanine--D-alanine ligase family. The cofactor is Mg(2+). Requires Mn(2+) as cofactor.

It localises to the cytoplasm. The enzyme catalyses 2 D-alanine + ATP = D-alanyl-D-alanine + ADP + phosphate + H(+). Its pathway is cell wall biogenesis; peptidoglycan biosynthesis. Its function is as follows. Cell wall formation. This is D-alanine--D-alanine ligase A (ddlA) from Escherichia coli O157:H7.